Consider the following 372-residue polypeptide: Glutamate 5-kinase (372 aa).

Lys-14 contributes to the ATP binding site. Substrate-binding residues include Ser-54, Asp-141, and Asn-153. ATP-binding positions include 173 to 174 and 215 to 221; these read TD and TGGMATK. The 79-residue stretch at 280–358 folds into the PUA domain; it reads RGQLVIDAGA…DSIEEVLGYD (79 aa).

This sequence belongs to the glutamate 5-kinase family.

It localises to the cytoplasm. The enzyme catalyses L-glutamate + ATP = L-glutamyl 5-phosphate + ADP. The protein operates within amino-acid biosynthesis; L-proline biosynthesis; L-glutamate 5-semialdehyde from L-glutamate: step 1/2. In terms of biological role, catalyzes the transfer of a phosphate group to glutamate to form L-glutamate 5-phosphate. The sequence is that of Glutamate 5-kinase from Shewanella pealeana (strain ATCC 700345 / ANG-SQ1).